A 209-amino-acid polypeptide reads, in one-letter code: MTKGILGRKIGMTQVFAENGDLIPVTVIEAAPNVVLQKKTAENDGYEAIQLGFDDKREKLSNKPEKGHVAKAETAPKRFVKELRGVDMDAYEIGQEVKVEIFSAGEIVDVTGVSKGKGFQGAIKRHGQSRGPMSHGSRYHRRPGSMGPVDPNRVFKGKLLPGRMGGDQITVQNLEIVKVDAERNLLLIKGNVPGARKTLITVKSAVKSK.

The tract at residues 122–151 (AIKRHGQSRGPMSHGSRYHRRPGSMGPVDP) is disordered.

The protein belongs to the universal ribosomal protein uL3 family. Part of the 50S ribosomal subunit. Forms a cluster with proteins L14 and L19.

Functionally, one of the primary rRNA binding proteins, it binds directly near the 3'-end of the 23S rRNA, where it nucleates assembly of the 50S subunit. In Bacillus velezensis (strain DSM 23117 / BGSC 10A6 / LMG 26770 / FZB42) (Bacillus amyloliquefaciens subsp. plantarum), this protein is Large ribosomal subunit protein uL3.